We begin with the raw amino-acid sequence, 354 residues long: MAELQNDRFLRALLKEPVDQTPVWMMRQAGRYLPEYRATRKQAGSFMDLCRNKELACEVTLQPLERYPLDAAILFSDILTIPDAMGLELRFQTGEGPIFDKPIKSMSDAKKLFVPDMASELGYVMDAVSTIRKALDGRVPLIGFSGSPWTLATYMVEGGSSKTFAKIKAMMYDQPATLHHILDVLADSVIAYLNAQIEAGAQAVQIFDTWGGVLTPRDYKEFSLNYMAKIVDGLKRENDGRKVPVILFTKGGGQWLESMAETGCDALGLDWTTDIDDARARVGDKVALQGNMDPSVLYASPDRIREEVATILEKYGQGTGHVFNLGHGIHPEIDPEHAGAFIKAVTELSPKYHK.

Residues 27 to 31 (RQAGR), D77, Y154, T209, and H327 contribute to the substrate site.

It belongs to the uroporphyrinogen decarboxylase family. In terms of assembly, homodimer.

The protein localises to the cytoplasm. The enzyme catalyses uroporphyrinogen III + 4 H(+) = coproporphyrinogen III + 4 CO2. The protein operates within porphyrin-containing compound metabolism; protoporphyrin-IX biosynthesis; coproporphyrinogen-III from 5-aminolevulinate: step 4/4. Catalyzes the decarboxylation of four acetate groups of uroporphyrinogen-III to yield coproporphyrinogen-III. This is Uroporphyrinogen decarboxylase from Hydrogenovibrio crunogenus (strain DSM 25203 / XCL-2) (Thiomicrospira crunogena).